Here is a 2363-residue protein sequence, read N- to C-terminus: Spectrin beta chain, non-erythrocytic 1 (2363 aa).

An N-acetylthreonine modification is found at Thr-2. Residues Thr-2–His-275 are actin-binding. Residues Ile-14 and Ser-36 each carry the phosphoserine modification. 2 Calponin-homology (CH) domains span residues Ala-54 to Gln-158 and Lys-173 to Ser-278. An N6-acetyllysine modification is found at Lys-90. The residue at position 228 (Ser-228) is a Phosphoserine. Spectrin repeat units follow at residues Met-303 to Arg-411, Leu-423 to Glu-525, Leu-530 to Glu-636, Arg-639 to Glu-742, Leu-745 to Asp-847, Ala-850 to Leu-952, Ile-957 to Glu-1060, Lys-1063 to Ser-1166, Ala-1170 to Lys-1259, Asp-1276 to Leu-1376, Lys-1381 to Leu-1482, Glu-1486 to Glu-1590, His-1592 to Glu-1696, His-1698 to Leu-1801, and Tyr-1805 to Leu-1907. Residues Ser-817, Ser-903, Ser-1057, Ser-1076, Ser-1079, and Ser-1237 each carry the phosphoserine modification. 3 positions are modified to phosphoserine: Ser-1388, Ser-1447, and Ser-1557. The tract at residues Ile-1563–Glu-2093 is interaction with ANK2. Position 1805 is a phosphotyrosine (Tyr-1805). Lys-1815, Lys-1913, and Lys-1989 each carry N6-acetyllysine. Spectrin repeat units lie at residues Phe-1914–Arg-2014 and Glu-2018–Lys-2097. A disordered region spans residues Arg-2089–Glu-2193. Ser-2102, Ser-2127, and Ser-2137 each carry phosphoserine. Positions Ser-2115 to Gly-2130 are enriched in polar residues. Thr-2146 bears the Phosphothreonine mark. Ser-2147 bears the Phosphoserine mark. The segment at Glu-2148 to Lys-2176 is mediates interaction with CAMSAP1. The residue at position 2158 (Thr-2158) is a Phosphothreonine. Phosphoserine occurs at positions 2159, 2160, 2163, 2164, and 2168. At Thr-2170 the chain carries Phosphothreonine. Residue Ser-2183 is modified to Phosphoserine. 2 positions are modified to phosphothreonine: Thr-2186 and Thr-2194. The PH domain maps to Ala-2196–Ser-2306. The tract at residues Asp-2308–Lys-2363 is disordered. Phosphoserine occurs at positions 2313 and 2318. Positions Ser-2313–Thr-2327 are enriched in low complexity. Thr-2319 carries the post-translational modification Phosphothreonine. O-linked (GlcNAc) serine glycosylation occurs at Ser-2323. Thr-2327 carries the post-translational modification Phosphothreonine. Residues Leu-2328 to Ser-2340 show a composition bias toward polar residues. 2 positions are modified to phosphoserine: Ser-2339 and Ser-2340. Basic and acidic residues predominate over residues Pro-2341–Phe-2356.

It belongs to the spectrin family. In terms of assembly, interacts with ANK2. Interacts with CPNE4 (via VWFA domain). Like erythrocyte spectrin, the spectrin-like proteins are capable to form dimers which can further associate to tetramers. Interacts with CAMSAP1. Can form heterodimers with SPTAN1. In terms of tissue distribution, isoform 2 is present in brain, heart, kidney and liver (at protein level).

Its subcellular location is the cytoplasm. It is found in the cytoskeleton. The protein localises to the endomembrane system. The protein resides in the myofibril. It localises to the sarcomere. Its subcellular location is the m line. It is found in the cytosol. The protein localises to the cell membrane. Fodrin, which seems to be involved in secretion, interacts with calmodulin in a calcium-dependent manner and is thus candidate for the calcium-dependent movement of the cytoskeleton at the membrane. Plays a critical role in central nervous system development and function. The protein is Spectrin beta chain, non-erythrocytic 1 (Sptbn1) of Mus musculus (Mouse).